A 239-amino-acid chain; its full sequence is Methylthioribulose-1-phosphate dehydratase (239 aa).

Substrate is bound at residue Cys94. Zn(2+) is bound by residues His112 and His114. Glu136 functions as the Proton donor/acceptor in the catalytic mechanism. His192 serves as a coordination point for Zn(2+).

The protein belongs to the aldolase class II family. MtnB subfamily. The cofactor is Zn(2+).

It is found in the cytoplasm. The catalysed reaction is 5-(methylsulfanyl)-D-ribulose 1-phosphate = 5-methylsulfanyl-2,3-dioxopentyl phosphate + H2O. It participates in amino-acid biosynthesis; L-methionine biosynthesis via salvage pathway; L-methionine from S-methyl-5-thio-alpha-D-ribose 1-phosphate: step 2/6. Catalyzes the dehydration of methylthioribulose-1-phosphate (MTRu-1-P) into 2,3-diketo-5-methylthiopentyl-1-phosphate (DK-MTP-1-P). Functions in the methionine salvage pathway. May play a role in apoptosis. The sequence is that of Methylthioribulose-1-phosphate dehydratase from Aquarana catesbeiana (American bullfrog).